Reading from the N-terminus, the 253-residue chain is RAD51-associated protein 1 (253 aa).

The tract at residues 32-51 (APLTKKSRTQPKEPKKENKK) is interaction with DNA. Disordered regions lie at residues 33-74 (PLTK…TSLD), 141-169 (DREH…EGND), and 184-244 (KKIK…WVPP). Positions 154–169 (PDEESEEDSDYREGND) are enriched in acidic residues. Residues 184-195 (KKIKRQTRKEKK) are compositionally biased toward basic residues. Residues 190–241 (TRKEKKTPKSENNTTVMELKSEQTQKMMSTSSEPVGRPLYTSSPVTNKKPKW) are interaction with DNA. The span at 199–222 (SENNTTVMELKSEQTQKMMSTSSE) shows a compositional bias: polar residues.

As to quaternary structure, monomer.

The protein resides in the chromosome. Its subcellular location is the nucleus. In terms of biological role, structure-specific DNA-binding protein involved in DNA repair by promoting RAD51-mediated homologous recombination. Acts by stimulating D-Loop formation by RAD51: specifically enhances joint molecule formation through its structure-specific DNA interaction and its interaction with RAD51. Binds single-stranded DNA (ssDNA), double-stranded DNA (dsDNA) and secondary DNA structures, such as D-loop structures: has a strong preference for branched-DNA structures that are obligatory intermediates during joint molecule formation. Involved in mitotic recombination-dependent replication fork processing. Also involved in meiosis by promoting DMC1-mediated homologous meiotic recombination. This is RAD51-associated protein 1 from Gallus gallus (Chicken).